We begin with the raw amino-acid sequence, 553 residues long: MSPAPAILALRRVYNFCLLVDEAHGFMALGKSGRGSFEWWQDCGYDCPLQEVDIMTGTMSKSLCCIGGFVSANGVYAAELERQRTLQHQNGAETLSTAVLVRILSLINKPKLIKERMTALGRKASFVADCLAQAGCDILSSYGSPVVCFPVGTIQQASRFHEEAMERGFAVACGVPPATPLWSCRVRVCIFATTSWEDILDLINMIIKVSCKLQLKGITATVFTPDTLPKQYLDDPSIAEQSIKSDASICSYVESLSKTYPGGDLEAKAPLNLAQSQEAVEASVKAFSKYGLGPSSARWFYGTFDVFIALERRLAKLYPSLQRHSGRCRAMLGTDAHTMMLSLLSACANPYTSGVMNILLIPTTASLAVQDGADLNRPRAETKIIYYEKLDNLVAKLRELPIDASKLHLTLYLQTTSHDGSSILDLPATVQMINSGMNDPNQLKGLKLILDDSGGLGKVGPHHLGYLDLMERDHGVSFLNQSLGIKLAPKTEIIVTGSFFNAFGQQGGYIISSASFIEVHTVSSKSFVFSTPPTPIQAALSGKVLEILSRGTC.

The N-terminal stretch at 1–25 (MSPAPAILALRRVYNFCLLVDEAHG) is a signal peptide. N-linked (GlcNAc...) asparagine glycosylation occurs at Asn480.

It belongs to the class-II pyridoxal-phosphate-dependent aminotransferase family. BioF subfamily. Requires pyridoxal 5'-phosphate as cofactor.

It localises to the endoplasmic reticulum. The protein operates within mycotoxin biosynthesis. Aminotransferase; part of the gene cluster that mediates the biosynthesis of fumonisins B1 (FB1), B2 (FB2), B3 (FB3), and B4 (FB4), which are carcinogenic mycotoxins. Within the pathway, FUM8 catalyzes the release of the C-18 polyketide chain from the highly reducing polyketide synthase FUM1 by a nucleophilic attack of a carbanion, which is derived from R-carbon of alanine by decarboxylation, on the carbonyl carbon of polyketide acyl chain. The biosynthesis starts with the FUM1-catalyzed carbon chain assembly from one molecule of acetyl-CoA, eight molecules of malonyl-CoA, and two molecules of methionine (in S-adenosyl form). The C18 polyketide chain is released from the enzyme by a nucleophilic attack of a carbanion, which is derived from R-carbon of alanine by decarboxylation, on the carbonyl carbon of polyketide acyl chain. This step is catalyzed by the pyridoxal 5'-phosphate-dependent aminoacyl transferase FUM8. The resultant 3-keto intermediate is then stereospecifically reduced to a 3-hydroxyl product by reductase FUM13. Subsequent oxidations at C-10 by the cytochrome P450 monooxygenase FUM2, C-14 and C-15 by FUM6, FUM12 or FUM15, tricarballylic esterification of the hydroxyl groups on C-14 and C-15 by acyltransferase FUM14, and C-5 hydroxylation by 2-keto-glutarate-dependent dioxygenase FUM3 furnish the biosynthesis of fumonisins. The tricarballylic moieties are most likely derived from the citric acid cycle, and their addition to the carbon backbone may involve FUM7, FUM10, FUM11 and FUM14. This is Aminotransferase FUM8 from Gibberella moniliformis (strain M3125 / FGSC 7600) (Maize ear and stalk rot fungus).